The following is a 177-amino-acid chain: Large ribosomal subunit protein uL10 (177 aa).

This sequence belongs to the universal ribosomal protein uL10 family. In terms of assembly, part of the ribosomal stalk of the 50S ribosomal subunit. The N-terminus interacts with L11 and the large rRNA to form the base of the stalk. The C-terminus forms an elongated spine to which L12 dimers bind in a sequential fashion forming a multimeric L10(L12)X complex.

In terms of biological role, forms part of the ribosomal stalk, playing a central role in the interaction of the ribosome with GTP-bound translation factors. This Caldanaerobacter subterraneus subsp. tengcongensis (strain DSM 15242 / JCM 11007 / NBRC 100824 / MB4) (Thermoanaerobacter tengcongensis) protein is Large ribosomal subunit protein uL10.